A 30-amino-acid chain; its full sequence is uncharacterized protein (30 aa).

The disordered stretch occupies residues Met1–Trp30.

This is an uncharacterized protein from Saccharomyces cerevisiae (strain ATCC 204508 / S288c) (Baker's yeast).